The primary structure comprises 104 residues: Pole-localizer protein TmaR (104 aa).

Coiled coils occupy residues R13–D43 and S76–E96.

The protein belongs to the pole-localizer TmaR family.

The protein localises to the cytoplasm. Its function is as follows. Pole-localizer protein involved in the regulation of several cellular processes. This Vibrio vulnificus (strain CMCP6) protein is Pole-localizer protein TmaR.